The following is a 748-amino-acid chain: Putative transmembrane protein ORF88 (748 aa).

The signal sequence occupies residues 1-20 (MIIMKSIILLLAWFLTKTQA). At 21–723 (NMLTESLYLS…LNLAPFKTLS (703 aa)) the chain is on the extracellular side. N-linked (GlcNAc...) asparagine; by host glycosylation is found at asparagine 55, asparagine 78, asparagine 99, asparagine 152, asparagine 189, asparagine 390, asparagine 467, and asparagine 499. The tract at residues 531 to 574 (LTFDSPPPPPTTTQAPPPPPTTTQAPPPPPTTTQAPPPPIVINT) is disordered. A compositionally biased stretch (pro residues) spans 535–570 (SPPPPPTTTQAPPPPPTTTQAPPPPPTTTQAPPPPI). N-linked (GlcNAc...) asparagine; by host glycosylation is found at asparagine 573, asparagine 584, asparagine 599, asparagine 612, and asparagine 617. The disordered stretch occupies residues 650–680 (PSIGRAPIPPPDVPVEPPRSIPTTNAPSPEE). The segment covering 656–669 (PIPPPDVPVEPPRS) has biased composition (pro residues). Residues 724 to 744 (YAGIGVVSFALLFTILVVCLI) traverse the membrane as a helical segment. Residues 745–748 (KFSI) are Cytoplasmic-facing.

Its subcellular location is the host membrane. This chain is Putative transmembrane protein ORF88, found in Magallana gigas (Pacific oyster).